A 266-amino-acid polypeptide reads, in one-letter code: Thymidylate synthase (266 aa).

R24 contacts dUMP. H54 is a binding site for (6R)-5,10-methylene-5,6,7,8-tetrahydrofolate. DUMP is bound at residue 129-130 (RR). The active-site Nucleophile is the C149. DUMP contacts are provided by residues 169 to 172 (RSAD), N180, and 210 to 212 (HIY). D172 contributes to the (6R)-5,10-methylene-5,6,7,8-tetrahydrofolate binding site. A265 is a (6R)-5,10-methylene-5,6,7,8-tetrahydrofolate binding site.

Belongs to the thymidylate synthase family. Bacterial-type ThyA subfamily. As to quaternary structure, homodimer.

The protein resides in the cytoplasm. It catalyses the reaction dUMP + (6R)-5,10-methylene-5,6,7,8-tetrahydrofolate = 7,8-dihydrofolate + dTMP. The protein operates within pyrimidine metabolism; dTTP biosynthesis. Its function is as follows. Catalyzes the reductive methylation of 2'-deoxyuridine-5'-monophosphate (dUMP) to 2'-deoxythymidine-5'-monophosphate (dTMP) while utilizing 5,10-methylenetetrahydrofolate (mTHF) as the methyl donor and reductant in the reaction, yielding dihydrofolate (DHF) as a by-product. This enzymatic reaction provides an intracellular de novo source of dTMP, an essential precursor for DNA biosynthesis. In Corynebacterium glutamicum (strain R), this protein is Thymidylate synthase.